The following is a 400-amino-acid chain: PHD finger protein 24 (400 aa).

Gly2 carries N-myristoyl glycine lipidation. Residues 28–38 (LRDRPSIRRTG) show a composition bias toward basic and acidic residues. Residues 28–99 (LRDRPSIRRT…PEEFDRTSRF (72 aa)) are disordered. Omega-N-methylarginine is present on Arg36. Ser43 carries the post-translational modification Phosphoserine. Thr47 bears the Phosphothreonine mark. Ser51 carries the phosphoserine modification. Basic and acidic residues predominate over residues 78–97 (AWERLRDGRGVEPEEFDRTS). The PHD-type zinc-finger motif lies at 129-190 (NDEMCDVCEV…TGWSCHYCDN (62 aa)).

This chain is PHD finger protein 24, found in Homo sapiens (Human).